We begin with the raw amino-acid sequence, 194 residues long: Segregation and condensation protein B (194 aa).

Belongs to the ScpB family. As to quaternary structure, homodimer. Homodimerization may be required to stabilize the binding of ScpA to the Smc head domains. Component of a cohesin-like complex composed of ScpA, ScpB and the Smc homodimer, in which ScpA and ScpB bind to the head domain of Smc. The presence of the three proteins is required for the association of the complex with DNA.

It is found in the cytoplasm. In terms of biological role, participates in chromosomal partition during cell division. May act via the formation of a condensin-like complex containing Smc and ScpA that pull DNA away from mid-cell into both cell halves. The polypeptide is Segregation and condensation protein B (Streptococcus agalactiae serotype Ia (strain ATCC 27591 / A909 / CDC SS700)).